The primary structure comprises 113 residues: Urease subunit beta (113 aa).

It belongs to the urease beta subunit family. As to quaternary structure, heterotrimer of UreA (gamma), UreB (beta) and UreC (alpha) subunits. Three heterotrimers associate to form the active enzyme.

Its subcellular location is the cytoplasm. The enzyme catalyses urea + 2 H2O + H(+) = hydrogencarbonate + 2 NH4(+). The protein operates within nitrogen metabolism; urea degradation; CO(2) and NH(3) from urea (urease route): step 1/1. This Nitrosospira multiformis (strain ATCC 25196 / NCIMB 11849 / C 71) protein is Urease subunit beta.